A 90-amino-acid polypeptide reads, in one-letter code: Probable Fe(2+)-trafficking protein (90 aa).

This sequence belongs to the Fe(2+)-trafficking protein family.

Its function is as follows. Could be a mediator in iron transactions between iron acquisition and iron-requiring processes, such as synthesis and/or repair of Fe-S clusters in biosynthetic enzymes. This is Probable Fe(2+)-trafficking protein from Pseudomonas entomophila (strain L48).